A 231-amino-acid chain; its full sequence is ATP phosphoribosyltransferase (231 aa).

This sequence belongs to the ATP phosphoribosyltransferase family. Short subfamily. Heteromultimer composed of HisG and HisZ subunits.

It is found in the cytoplasm. It catalyses the reaction 1-(5-phospho-beta-D-ribosyl)-ATP + diphosphate = 5-phospho-alpha-D-ribose 1-diphosphate + ATP. Its pathway is amino-acid biosynthesis; L-histidine biosynthesis; L-histidine from 5-phospho-alpha-D-ribose 1-diphosphate: step 1/9. Catalyzes the condensation of ATP and 5-phosphoribose 1-diphosphate to form N'-(5'-phosphoribosyl)-ATP (PR-ATP). Has a crucial role in the pathway because the rate of histidine biosynthesis seems to be controlled primarily by regulation of HisG enzymatic activity. The polypeptide is ATP phosphoribosyltransferase (hisG) (Rhizobium etli (strain ATCC 51251 / DSM 11541 / JCM 21823 / NBRC 15573 / CFN 42)).